Reading from the N-terminus, the 428-residue chain is Something about silencing protein 10 (428 aa).

A disordered region spans residues Met-1–Ser-93. Composition is skewed to acidic residues over residues Gln-15–Ile-24 and Ser-46–Asp-62. 4 positions are modified to phosphoserine: Ser-152, Ser-323, Ser-324, and Ser-337. The segment at Gly-317–Gly-386 is disordered. Residues Ser-324–Glu-336 show a composition bias toward acidic residues. The span at Glu-344 to Glu-353 shows a compositional bias: acidic residues. The segment covering Thr-370 to Gly-386 has biased composition (basic residues).

Belongs to the SAS10 family.

It localises to the nucleus. Functionally, essential for gene silencing: has a role in the structure of silenced chromatin. May be involved in gene regulation during development. Binds RNA. The polypeptide is Something about silencing protein 10 (Drosophila melanogaster (Fruit fly)).